The sequence spans 144 residues: Protein D (144 aa).

The polypeptide is Protein D (D) (Escherichia coli).